A 327-amino-acid polypeptide reads, in one-letter code: Glycerol-3-phosphate dehydrogenase [NAD(P)+] (327 aa).

NADPH is bound by residues Phe13, Arg34, and Lys107. The sn-glycerol 3-phosphate site is built by Lys107 and Gly135. Ala139 serves as a coordination point for NADPH. Sn-glycerol 3-phosphate contacts are provided by Lys190, Asp243, Ser253, Arg254, and Asn255. Lys190 acts as the Proton acceptor in catalysis. Arg254 provides a ligand contact to NADPH. The NADPH site is built by Val276 and Glu277.

The protein belongs to the NAD-dependent glycerol-3-phosphate dehydrogenase family.

The protein localises to the cytoplasm. It carries out the reaction sn-glycerol 3-phosphate + NAD(+) = dihydroxyacetone phosphate + NADH + H(+). It catalyses the reaction sn-glycerol 3-phosphate + NADP(+) = dihydroxyacetone phosphate + NADPH + H(+). Its pathway is membrane lipid metabolism; glycerophospholipid metabolism. In terms of biological role, catalyzes the reduction of the glycolytic intermediate dihydroxyacetone phosphate (DHAP) to sn-glycerol 3-phosphate (G3P), the key precursor for phospholipid synthesis. The chain is Glycerol-3-phosphate dehydrogenase [NAD(P)+] from Rhizobium etli (strain ATCC 51251 / DSM 11541 / JCM 21823 / NBRC 15573 / CFN 42).